The chain runs to 305 residues: Putative S-adenosyl-L-methionine-dependent methyltransferase MAB_4607c (305 aa).

S-adenosyl-L-methionine-binding positions include D128 and 155–156 (DL).

The protein belongs to the UPF0677 family.

Exhibits S-adenosyl-L-methionine-dependent methyltransferase activity. This chain is Putative S-adenosyl-L-methionine-dependent methyltransferase MAB_4607c, found in Mycobacteroides abscessus (strain ATCC 19977 / DSM 44196 / CCUG 20993 / CIP 104536 / JCM 13569 / NCTC 13031 / TMC 1543 / L948) (Mycobacterium abscessus).